We begin with the raw amino-acid sequence, 160 residues long: Nucleotide-binding protein CbuK_1936 (160 aa).

It belongs to the YajQ family.

Functionally, nucleotide-binding protein. The sequence is that of Nucleotide-binding protein CbuK_1936 from Coxiella burnetii (strain CbuK_Q154) (Coxiella burnetii (strain Q154)).